The chain runs to 310 residues: Bifunctional protein FolD 3, chloroplastic (310 aa).

The transit peptide at 1 to 48 (MFTDCSSSTTSRLIHLYNRNGVFLPRPSVSQFSLRTTASTWRCTLSIR) directs the protein to the chloroplast.

Belongs to the tetrahydrofolate dehydrogenase/cyclohydrolase family. Homodimer.

The protein localises to the plastid. It localises to the chloroplast. It catalyses the reaction (6R)-5,10-methylene-5,6,7,8-tetrahydrofolate + NADP(+) = (6R)-5,10-methenyltetrahydrofolate + NADPH. The enzyme catalyses (6R)-5,10-methenyltetrahydrofolate + H2O = (6R)-10-formyltetrahydrofolate + H(+). It functions in the pathway one-carbon metabolism; tetrahydrofolate interconversion. Its function is as follows. Catalyzes the oxidation of 5,10-methylenetetrahydrofolate to 5,10-methenyltetrahydrofolate and then the hydrolysis of 5,10-methenyltetrahydrofolate to 10-formyltetrahydrofolate. In Arabidopsis thaliana (Mouse-ear cress), this protein is Bifunctional protein FolD 3, chloroplastic (FOLD3).